The chain runs to 500 residues: L-arabinose isomerase (500 aa).

Positions 306, 333, 349, and 448 each coordinate Mn(2+).

This sequence belongs to the arabinose isomerase family. Mn(2+) is required as a cofactor.

It carries out the reaction beta-L-arabinopyranose = L-ribulose. The protein operates within carbohydrate degradation; L-arabinose degradation via L-ribulose; D-xylulose 5-phosphate from L-arabinose (bacterial route): step 1/3. In terms of biological role, catalyzes the conversion of L-arabinose to L-ribulose. This Shewanella sp. (strain ANA-3) protein is L-arabinose isomerase.